The chain runs to 427 residues: Retron Mx65 reverse transcriptase (427 aa).

Positions 136–366 constitute a Reverse transcriptase domain; that stretch reads RHYSIHRPRE…GAQRVTGVTV (231 aa). Mg(2+)-binding residues include Asp-219, Asp-315, and Asp-316.

The protein belongs to the bacterial reverse transcriptase family.

It catalyses the reaction DNA(n) + a 2'-deoxyribonucleoside 5'-triphosphate = DNA(n+1) + diphosphate. In terms of biological role, reverse transcriptase (RT) responsible for synthesis of msDNA-Mx65 (a branched molecule with RNA linked by a 2',5'-phosphodiester bond to ssDNA). The retron transcript serves as primer (from a conserved internal G residue) and template for the reaction, and codes for the RT. The retron is involved in antiviral defense. The polypeptide is Retron Mx65 reverse transcriptase (Myxococcus xanthus).